A 365-amino-acid chain; its full sequence is 3-isopropylmalate dehydrogenase (365 aa).

76–89 (GPKWDQNPSELRPE) provides a ligand contact to NAD(+). Arg-96, Arg-106, Arg-134, and Asp-224 together coordinate substrate. 3 residues coordinate Mg(2+): Asp-224, Asp-248, and Asp-252. An NAD(+)-binding site is contributed by 282 to 294 (GSAPDIAGKGMAN).

The protein belongs to the isocitrate and isopropylmalate dehydrogenases family. LeuB type 1 subfamily. Homodimer. Mg(2+) serves as cofactor. Requires Mn(2+) as cofactor.

Its subcellular location is the cytoplasm. It catalyses the reaction (2R,3S)-3-isopropylmalate + NAD(+) = 4-methyl-2-oxopentanoate + CO2 + NADH. Its pathway is amino-acid biosynthesis; L-leucine biosynthesis; L-leucine from 3-methyl-2-oxobutanoate: step 3/4. Its function is as follows. Catalyzes the oxidation of 3-carboxy-2-hydroxy-4-methylpentanoate (3-isopropylmalate) to 3-carboxy-4-methyl-2-oxopentanoate. The product decarboxylates to 4-methyl-2 oxopentanoate. The sequence is that of 3-isopropylmalate dehydrogenase (leuB) from Bacillus subtilis (strain 168).